The primary structure comprises 305 residues: NADH-cytochrome b5 reductase 1 (305 aa).

A helical transmembrane segment spans residues 8–28 (VLLASLGVGLVTLLGLAVGSY). Residues 44–156 (NEKYLLRLLD…RGPSGLLTYT (113 aa)) enclose the FAD-binding FR-type domain. FAD-binding positions include 136-166 (DSLK…IQPN) and 175-210 (VAKK…QCFL).

It belongs to the flavoprotein pyridine nucleotide cytochrome reductase family. It depends on FAD as a cofactor. Widely expressed.

The protein localises to the membrane. The enzyme catalyses 2 Fe(III)-[cytochrome b5] + NADH = 2 Fe(II)-[cytochrome b5] + NAD(+) + H(+). In terms of biological role, NADH-cytochrome b5 reductases are involved in desaturation and elongation of fatty acids, cholesterol biosynthesis, drug metabolism, and, in erythrocyte, methemoglobin reduction. In Homo sapiens (Human), this protein is NADH-cytochrome b5 reductase 1 (CYB5R1).